The chain runs to 432 residues: 7-dehydrocholesterol reductase (432 aa).

9 helical membrane passes run 12–34 (YASM…YTMV), 64–86 (LIAW…LLPG), 107–126 (LAAY…FGIF), 136–155 (GEIF…LLYI), 195–212 (FTNC…AVTY), 227–249 (MLVN…AGYW), 261–283 (FYIC…MYLV), 287–309 (VELG…YINY), and 371–393 (SAFF…VIFL).

This sequence belongs to the ERG4/ERG24 family.

It localises to the endoplasmic reticulum membrane. It catalyses the reaction cholesterol + NADP(+) = 7-dehydrocholesterol + NADPH + H(+). It functions in the pathway lipid metabolism; steroid biosynthesis. Production of cholesterol by reduction of C7-C8 double bond of 7-dehydrocholesterol (7-DHC). Lesions in the gene coding for the enzyme cause dwarfism. The chain is 7-dehydrocholesterol reductase (DWF5) from Arabidopsis thaliana (Mouse-ear cress).